A 220-amino-acid polypeptide reads, in one-letter code: Nicotinamidase (220 aa).

Aspartate 11 is an active-site residue. 3 residues coordinate Zn(2+): aspartate 53, histidine 55, and histidine 94. Lysine 119 is a catalytic residue. Catalysis depends on cysteine 163, which acts as the Nucleophile.

Belongs to the isochorismatase family.

Its subcellular location is the cytoplasm. The protein localises to the nucleus. The protein resides in the peroxisome. It catalyses the reaction nicotinamide + H2O = nicotinate + NH4(+). It participates in cofactor biosynthesis; nicotinate biosynthesis; nicotinate from nicotinamide: step 1/1. Catalyzes the deamidation of nicotinamide, an early step in the NAD(+) salvage pathway. This Schizosaccharomyces pombe (strain 972 / ATCC 24843) (Fission yeast) protein is Nicotinamidase (pnc1).